The sequence spans 189 residues: dCTP deaminase (189 aa).

DCTP-binding positions include 112–117 (KSTYAR), 136–138 (TLE), Gln-157, Tyr-171, and Gln-181. The active-site Proton donor/acceptor is Glu-138.

It belongs to the dCTP deaminase family. As to quaternary structure, homotrimer.

The enzyme catalyses dCTP + H2O + H(+) = dUTP + NH4(+). It functions in the pathway pyrimidine metabolism; dUMP biosynthesis; dUMP from dCTP (dUTP route): step 1/2. In terms of biological role, catalyzes the deamination of dCTP to dUTP. This Nitrosospira multiformis (strain ATCC 25196 / NCIMB 11849 / C 71) protein is dCTP deaminase.